The sequence spans 194 residues: Large ribosomal subunit protein bL25 (194 aa).

This sequence belongs to the bacterial ribosomal protein bL25 family. CTC subfamily. In terms of assembly, part of the 50S ribosomal subunit; part of the 5S rRNA/L5/L18/L25 subcomplex. Contacts the 5S rRNA. Binds to the 5S rRNA independently of L5 and L18.

In terms of biological role, this is one of the proteins that binds to the 5S RNA in the ribosome where it forms part of the central protuberance. The polypeptide is Large ribosomal subunit protein bL25 (Neorickettsia sennetsu (strain ATCC VR-367 / Miyayama) (Ehrlichia sennetsu)).